Here is a 387-residue protein sequence, read N- to C-terminus: Flap endonuclease 1 (387 aa).

The N-domain stretch occupies residues M1–R104. D34 serves as a coordination point for Mg(2+). The DNA site is built by R47 and R70. Mg(2+) contacts are provided by D86, E158, E160, D179, and D181. Residues G122–Y253 form an I-domain region. E158 contributes to the DNA binding site. DNA-binding residues include G231 and D233. D233 lines the Mg(2+) pocket. The interval T336–F344 is interaction with PCNA. A disordered region spans residues T346–K387.

The protein belongs to the XPG/RAD2 endonuclease family. FEN1 subfamily. As to quaternary structure, interacts with PCNA. Three molecules of FEN1 bind to one PCNA trimer with each molecule binding to one PCNA monomer. PCNA stimulates the nuclease activity without altering cleavage specificity. It depends on Mg(2+) as a cofactor. Post-translationally, phosphorylated. Phosphorylation upon DNA damage induces relocalization to the nuclear plasma.

It is found in the nucleus. Its subcellular location is the nucleolus. It localises to the nucleoplasm. The protein resides in the mitochondrion. Functionally, structure-specific nuclease with 5'-flap endonuclease and 5'-3' exonuclease activities involved in DNA replication and repair. During DNA replication, cleaves the 5'-overhanging flap structure that is generated by displacement synthesis when DNA polymerase encounters the 5'-end of a downstream Okazaki fragment. It enters the flap from the 5'-end and then tracks to cleave the flap base, leaving a nick for ligation. Also involved in the long patch base excision repair (LP-BER) pathway, by cleaving within the apurinic/apyrimidinic (AP) site-terminated flap. Acts as a genome stabilization factor that prevents flaps from equilibrating into structures that lead to duplications and deletions. Also possesses 5'-3' exonuclease activity on nicked or gapped double-stranded DNA, and exhibits RNase H activity. Also involved in replication and repair of rDNA and in repairing mitochondrial DNA. This Drosophila erecta (Fruit fly) protein is Flap endonuclease 1.